Consider the following 412-residue polypeptide: DnaJ homolog subfamily A member 2 (412 aa).

One can recognise a J domain in the interval 8 to 70 (KLYDILGVPP…EKRELYDRYG (63 aa)). Lysine 39 carries the post-translational modification N6-acetyllysine. 2 positions are modified to phosphoserine: serine 78 and serine 123. Residues 130–214 (GKTTKLQLSK…CEGKKVIKEV (85 aa)) form a CR-type zinc finger. Lysine 134 participates in a covalent cross-link: Glycyl lysine isopeptide (Lys-Gly) (interchain with G-Cter in SUMO2). Positions 143 and 146 each coordinate Zn(2+). Residues 143 to 150 (CSACSGQG) form a CXXCXGXG motif repeat. Lysine 152 is subject to N6-acetyllysine. Residues cysteine 159, cysteine 162, cysteine 186, cysteine 189, cysteine 202, and cysteine 205 each coordinate Zn(2+). CXXCXGXG motif repeat units follow at residues 159–166 (CSACRGRG), 186–193 (CSDCNGEG), and 202–209 (CKKCEGKK). Residues 365-412 (IGETEEVELQEFDSTRGSGGGQRREAYNDSSDEESSSHHGPGVQCAHQ) form a disordered region. Tyrosine 391 carries the phosphotyrosine modification. Residues serine 394 and serine 395 each carry the phosphoserine modification. Cysteine 409 is subject to Cysteine methyl ester. Cysteine 409 is lipidated: S-farnesyl cysteine. Positions 410–412 (AHQ) are cleaved as a propeptide — removed in mature form.

It localises to the membrane. In terms of biological role, co-chaperone of Hsc70. Stimulates ATP hydrolysis and the folding of unfolded proteins mediated by HSPA1A/B (in vitro). The polypeptide is DnaJ homolog subfamily A member 2 (Dnaja2) (Rattus norvegicus (Rat)).